A 393-amino-acid chain; its full sequence is NAD(P)H-quinone oxidoreductase subunit H, chloroplastic (393 aa).

Belongs to the complex I 49 kDa subunit family. In terms of assembly, NDH is composed of at least 16 different subunits, 5 of which are encoded in the nucleus.

It is found in the plastid. Its subcellular location is the chloroplast thylakoid membrane. The enzyme catalyses a plastoquinone + NADH + (n+1) H(+)(in) = a plastoquinol + NAD(+) + n H(+)(out). It carries out the reaction a plastoquinone + NADPH + (n+1) H(+)(in) = a plastoquinol + NADP(+) + n H(+)(out). In terms of biological role, NDH shuttles electrons from NAD(P)H:plastoquinone, via FMN and iron-sulfur (Fe-S) centers, to quinones in the photosynthetic chain and possibly in a chloroplast respiratory chain. The immediate electron acceptor for the enzyme in this species is believed to be plastoquinone. Couples the redox reaction to proton translocation, and thus conserves the redox energy in a proton gradient. The protein is NAD(P)H-quinone oxidoreductase subunit H, chloroplastic of Angiopteris evecta (Mule's foot fern).